The primary structure comprises 239 residues: Dolichyldiphosphatase (239 aa).

Over 1 to 34 (MNSTAAAINPNPNVIPFDDTYILYDSHDFLSFLS) the chain is Lumenal. The helical transmembrane segment at 35–55 (AYFSLMPILVLAFYLSWFIIT) threads the bilayer. At 56–131 (RELEACIVAF…KIYTSWKNLN (76 aa)) the chain is on the cytoplasmic side. The chain crosses the membrane as a helical span at residues 132–152 (FLEKCIFSGALALLSFCVCFS). Residues 153 to 164 (RVYLHYHNLDQV) are Lumenal-facing. A helical transmembrane segment spans residues 165-185 (IVGFSVGALTGSLYFFIVGII). Over 186 to 239 (RELGLINWFLKLRIVRLFYMTDSYNLAPLTLKENYEAYWKRINQRSFNDKSKRD) the chain is Cytoplasmic.

The protein belongs to the dolichyldiphosphatase family.

The protein localises to the endoplasmic reticulum membrane. The catalysed reaction is a di-trans,poly-cis-dolichyl diphosphate + H2O = a di-trans,poly-cis-dolichyl phosphate + phosphate + H(+). The protein operates within protein modification; protein glycosylation. In terms of biological role, non-essential protein which is required for efficient N-glycosylation. Necessary for maintaining optimal levels of dolichol-linked oligosaccharides. Hydrolyzes dolichyl pyrophosphate at a very high rate and dolichyl monophosphate at a much lower rate. Does not act on phosphatidate. In Saccharomyces cerevisiae (strain ATCC 204508 / S288c) (Baker's yeast), this protein is Dolichyldiphosphatase (CAX4).